Consider the following 534-residue polypeptide: Cytochrome c oxidase subunit 1 (534 aa).

A helical membrane pass occupies residues 16–36; it reads VLYFIFSVFCGMAGTGMSMII. Residues Glu-39 and Gly-44 each contribute to the Ca(2+) site. His-62 lines the Fe(II)-heme a pocket. 6 helical membrane passes run 64-84, 101-121, 147-167, 183-203, 235-255, and 267-287; these read ILMV…NYLL, ISFW…LVES, AIFA…NFIV, PLFV…LPVL, LFWF…FGVI, and VFGE…GFLV. A Cu cation-binding site is contributed by His-241. Residues 241-245 constitute a cross-link (1'-histidyl-3'-tyrosine (His-Tyr)); it reads HPEVY. Residue Tyr-245 coordinates O2. Cu cation contacts are provided by His-290 and His-291. The next 2 helical transmembrane spans lie at 310 to 330 and 338 to 358; these read MIIA…IYGG and MMYA…GVAL. Residues His-368 and Asp-369 each coordinate Mg(2+). The next 2 membrane-spanning stretches (helical) occupy residues 372-392 and 414-434; these read YVVA…MFAG and FWLI…LGIN. His-376 is a heme a3 binding site. His-378 is a Fe(II)-heme a binding site. Residue Pro-441 participates in Ca(2+) binding. The helical transmembrane segment at 453–473 threads the bilayer; that stretch reads VSSIGSFIAMISLILFIYILF.

It belongs to the heme-copper respiratory oxidase family. As to quaternary structure, component of the cytochrome c oxidase (complex IV, CIV), a multisubunit enzyme composed of a catalytic core of 3 subunits and several supernumerary subunits. The complex exists as a monomer or a dimer and forms supercomplexes (SCs) in the inner mitochondrial membrane with ubiquinol-cytochrome c oxidoreductase (cytochrome b-c1 complex, complex III, CIII). Heme is required as a cofactor. It depends on Cu cation as a cofactor.

The protein resides in the mitochondrion inner membrane. The enzyme catalyses 4 Fe(II)-[cytochrome c] + O2 + 8 H(+)(in) = 4 Fe(III)-[cytochrome c] + 2 H2O + 4 H(+)(out). The protein operates within energy metabolism; oxidative phosphorylation. In terms of biological role, component of the cytochrome c oxidase, the last enzyme in the mitochondrial electron transport chain which drives oxidative phosphorylation. The respiratory chain contains 3 multisubunit complexes succinate dehydrogenase (complex II, CII), ubiquinol-cytochrome c oxidoreductase (cytochrome b-c1 complex, complex III, CIII) and cytochrome c oxidase (complex IV, CIV), that cooperate to transfer electrons derived from NADH and succinate to molecular oxygen, creating an electrochemical gradient over the inner membrane that drives transmembrane transport and the ATP synthase. Cytochrome c oxidase is the component of the respiratory chain that catalyzes the reduction of oxygen to water. Electrons originating from reduced cytochrome c in the intermembrane space (IMS) are transferred via the dinuclear copper A center (CU(A)) of subunit 2 and heme A of subunit 1 to the active site in subunit 1, a binuclear center (BNC) formed by heme A3 and copper B (CU(B)). The BNC reduces molecular oxygen to 2 water molecules using 4 electrons from cytochrome c in the IMS and 4 protons from the mitochondrial matrix. The sequence is that of Cytochrome c oxidase subunit 1 (COX1) from Vanderwaltozyma polyspora (strain ATCC 22028 / DSM 70294 / BCRC 21397 / CBS 2163 / NBRC 10782 / NRRL Y-8283 / UCD 57-17) (Kluyveromyces polysporus).